A 208-amino-acid polypeptide reads, in one-letter code: Translation initiation factor 6 (208 aa).

It belongs to the eIF-6 family.

Its function is as follows. Binds to the 50S ribosomal subunit and prevents its association with the 30S ribosomal subunit to form the 70S initiation complex. This chain is Translation initiation factor 6 (eif6), found in Nanoarchaeum equitans (strain Kin4-M).